Consider the following 358-residue polypeptide: Probable dual-specificity RNA methyltransferase RlmN 2 (358 aa).

E90 serves as the catalytic Proton acceptor. Positions S96–D328 constitute a Radical SAM core domain. C103 and C334 form a disulfide bridge. Positions 110, 114, and 117 each coordinate [4Fe-4S] cluster. Residues G160 to E161, S192, S215 to H217, and N291 contribute to the S-adenosyl-L-methionine site. Residue C334 is the S-methylcysteine intermediate of the active site.

It belongs to the radical SAM superfamily. RlmN family. It depends on [4Fe-4S] cluster as a cofactor.

It localises to the cytoplasm. The enzyme catalyses adenosine(2503) in 23S rRNA + 2 reduced [2Fe-2S]-[ferredoxin] + 2 S-adenosyl-L-methionine = 2-methyladenosine(2503) in 23S rRNA + 5'-deoxyadenosine + L-methionine + 2 oxidized [2Fe-2S]-[ferredoxin] + S-adenosyl-L-homocysteine. The catalysed reaction is adenosine(37) in tRNA + 2 reduced [2Fe-2S]-[ferredoxin] + 2 S-adenosyl-L-methionine = 2-methyladenosine(37) in tRNA + 5'-deoxyadenosine + L-methionine + 2 oxidized [2Fe-2S]-[ferredoxin] + S-adenosyl-L-homocysteine. In terms of biological role, specifically methylates position 2 of adenine 2503 in 23S rRNA and position 2 of adenine 37 in tRNAs. The sequence is that of Probable dual-specificity RNA methyltransferase RlmN 2 from Protochlamydia amoebophila (strain UWE25).